A 408-amino-acid chain; its full sequence is S-adenosylmethionine synthase (408 aa).

Residue 142 to 147 coordinates ATP; that stretch reads GEGSGD.

Belongs to the AdoMet synthase 2 family. Mg(2+) is required as a cofactor.

The enzyme catalyses L-methionine + ATP + H2O = S-adenosyl-L-methionine + phosphate + diphosphate. The protein operates within amino-acid biosynthesis; S-adenosyl-L-methionine biosynthesis; S-adenosyl-L-methionine from L-methionine: step 1/1. Catalyzes the formation of S-adenosylmethionine from methionine and ATP. The polypeptide is S-adenosylmethionine synthase (Halobacterium salinarum (strain ATCC 29341 / DSM 671 / R1)).